Here is a 347-residue protein sequence, read N- to C-terminus: MGGKMKAIVKNENAFGATLKEIPIPSINENEVLIKVQAASICGTDVHIYNWDQWAQKRIKTPQVFGHEFSGIVAETGKHVTNVKTGDYVSAETHFVCGTCVPCLTGKHHVCTHTKILGVDTAGSFAEYVKVPARNVWKNPADMDPAVASVQEPLGNAVHTVLESSQLAGGSAAIIGCGPIGLMAVAVAKAAGASRIAAIDKNDYRLALAKKLGATITISADKEDPLEVIDTLTGGEGIDLVCEMSGHPAAIAQGLKMAANGGRFHMLSLPERPVTVDLTNDVVFKGLTVQGITGRKMFETWRQVSHLLESGLVDLTPVITHQLPLEDFEKGFDLMRKGQCGKVILIP.

Zn(2+) is bound at residue C42. Residues T44 and H47 each act as charge relay system in the active site. Zn(2+)-binding residues include H67, E68, C97, C100, C103, and C111. NAD(+)-binding positions include I180, D200, R205, 267–269 (LSL), and 292–293 (IT).

It belongs to the zinc-containing alcohol dehydrogenase family. As to quaternary structure, homotetramer. Requires Zn(2+) as cofactor.

Its subcellular location is the cytoplasm. It carries out the reaction L-threonine + NAD(+) = (2S)-2-amino-3-oxobutanoate + NADH + H(+). The protein operates within amino-acid degradation; L-threonine degradation via oxydo-reductase pathway; glycine from L-threonine: step 1/2. Catalyzes the NAD(+)-dependent oxidation of L-threonine to 2-amino-3-ketobutyrate. The protein is L-threonine 3-dehydrogenase of Bacillus velezensis (strain DSM 23117 / BGSC 10A6 / LMG 26770 / FZB42) (Bacillus amyloliquefaciens subsp. plantarum).